Reading from the N-terminus, the 304-residue chain is Nod factor export ATP-binding protein I (304 aa).

An ABC transporter domain is found at 6–236; it reads IEFDKVKKSY…EIGCDVIEIF (231 aa). 38 to 45 is a binding site for ATP; it reads GPNGAGKT.

The protein belongs to the ABC transporter superfamily. Lipooligosaccharide exporter (TC 3.A.1.102) family. The complex is composed of two ATP-binding proteins (NodI) and two transmembrane proteins (NodJ).

Its subcellular location is the cell inner membrane. In terms of biological role, part of the ABC transporter complex NodIJ involved in the export of the nodulation factors (Nod factors), the bacterial signal molecules that induce symbiosis and subsequent nodulation induction. Nod factors are LCO (lipo-chitin oligosaccharide), a modified beta-1,4-linked N-acetylglucosamine oligosaccharide. This subunit is responsible for energy coupling to the transport system. This chain is Nod factor export ATP-binding protein I, found in Paraburkholderia xenovorans (strain LB400).